A 357-amino-acid chain; its full sequence is UDP-N-acetylglucosamine--N-acetylmuramyl-(pentapeptide) pyrophosphoryl-undecaprenol N-acetylglucosamine transferase (357 aa).

UDP-N-acetyl-alpha-D-glucosamine contacts are provided by residues 13-15 (SAG), Arg166, Ser196, and Gln291.

This sequence belongs to the glycosyltransferase 28 family. MurG subfamily.

It is found in the cell membrane. The enzyme catalyses di-trans,octa-cis-undecaprenyl diphospho-N-acetyl-alpha-D-muramoyl-L-alanyl-D-glutamyl-meso-2,6-diaminopimeloyl-D-alanyl-D-alanine + UDP-N-acetyl-alpha-D-glucosamine = di-trans,octa-cis-undecaprenyl diphospho-[N-acetyl-alpha-D-glucosaminyl-(1-&gt;4)]-N-acetyl-alpha-D-muramoyl-L-alanyl-D-glutamyl-meso-2,6-diaminopimeloyl-D-alanyl-D-alanine + UDP + H(+). It functions in the pathway cell wall biogenesis; peptidoglycan biosynthesis. Its function is as follows. Cell wall formation. Catalyzes the transfer of a GlcNAc subunit on undecaprenyl-pyrophosphoryl-MurNAc-pentapeptide (lipid intermediate I) to form undecaprenyl-pyrophosphoryl-MurNAc-(pentapeptide)GlcNAc (lipid intermediate II). This is UDP-N-acetylglucosamine--N-acetylmuramyl-(pentapeptide) pyrophosphoryl-undecaprenol N-acetylglucosamine transferase from Clostridium perfringens (strain ATCC 13124 / DSM 756 / JCM 1290 / NCIMB 6125 / NCTC 8237 / Type A).